A 386-amino-acid polypeptide reads, in one-letter code: Nucleosome assembly protein 1-like 4 (386 aa).

The disordered stretch occupies residues methionine 1 to aspartate 29. Position 2 is an N-acetylalanine (alanine 2). A phosphoserine mark is found at serine 5, serine 7, and serine 12. The segment covering asparagine 20–aspartate 29 has biased composition (polar residues). Position 49 is a phosphoserine (serine 49). The residue at position 51 (threonine 51) is a Phosphothreonine. Phosphoserine occurs at positions 53 and 54. Phosphothreonine is present on threonine 58. Position 105 is an N6-acetyllysine (lysine 105). Serine 125 carries the post-translational modification Phosphoserine. Lysine 146 carries the post-translational modification N6-acetyllysine. Residues isoleucine 265 to histidine 271 carry the Nuclear localization signal motif. Phosphoserine is present on serine 304. Acidic residues predominate over residues alanine 339–glutamate 370. The disordered stretch occupies residues alanine 339–glutamine 386.

The protein belongs to the nucleosome assembly protein (NAP) family. In terms of assembly, interacts with core (H2A, H2B, H3, H4) and linker (H1) histones. In terms of processing, polyglutamylated and polyglycylated. These 2 modifications occur exclusively on glutamate residues and result in either polyglutamate or polyglycine chains on the gamma-carboxyl group. Both modifications can coexist on the same protein on adjacent residues, and lowering polyglycylation levels increases polyglutamylation, and reciprocally. Polyglutamylated by TTLL4. Phosphorylated at the G0/G1 boundary but it is not phosphorylated in S-phase. Phosphorylated protein remains in the cytoplasm in a complex with histones during the G0/G1 transition, whereas dephosphorylation triggers its transport into the nucleus at the G1/S-boundary.

The protein localises to the nucleus. Its subcellular location is the cytoplasm. In terms of biological role, acts as a histone chaperone in nucleosome assembly. The sequence is that of Nucleosome assembly protein 1-like 4 (NAP1L4) from Bos taurus (Bovine).